The following is a 254-amino-acid chain: Large ribosomal subunit protein uL2 (254 aa).

This sequence belongs to the universal ribosomal protein uL2 family.

This is Large ribosomal subunit protein uL2 (RPL2) from Candida glabrata (strain ATCC 2001 / BCRC 20586 / JCM 3761 / NBRC 0622 / NRRL Y-65 / CBS 138) (Yeast).